The chain runs to 293 residues: Protease HtpX (293 aa).

A run of 2 helical transmembrane segments spans residues 4-24 (IALF…VLSL) and 34-54 (GLMI…LLMS). H139 serves as a coordination point for Zn(2+). The active site involves E140. H143 contacts Zn(2+). Transmembrane regions (helical) follow at residues 158–178 (VVNT…AGFM) and 193–213 (LIYF…ASII). Residue E222 coordinates Zn(2+).

The protein belongs to the peptidase M48B family. It depends on Zn(2+) as a cofactor.

The protein resides in the cell inner membrane. The chain is Protease HtpX from Escherichia coli (strain ATCC 8739 / DSM 1576 / NBRC 3972 / NCIMB 8545 / WDCM 00012 / Crooks).